We begin with the raw amino-acid sequence, 191 residues long: TATA-box-binding protein (191 aa).

2 repeat units span residues 18–94 (LQNV…AKIV) and 108–185 (IQNI…YPVL).

It belongs to the TBP family. Belongs to the TFIID complex together with the TBP-associated factors (TAFs). Binds DNA as monomer.

The protein resides in the nucleus. In terms of biological role, general transcription factor that functions at the core of the DNA-binding multiprotein factor TFIID. Binding of TFIID to the TATA box is the initial transcriptional step of the pre-initiation complex (PIC), playing a role in the activation of eukaryotic genes transcribed by RNA polymerase II. This Acetabularia peniculus (Green alga) protein is TATA-box-binding protein.